Consider the following 426-residue polypeptide: Cytochrome c biogenesis protein CcsB (426 aa).

The next 3 membrane-spanning stretches (helical) occupy residues 14-34 (LKIAILLLLVIAVSCAAGTLI), 72-92 (SFWFLFLLIWLGLALSVCSFR), and 162-182 (LGPILIHLGMILLMIGATYGS).

This sequence belongs to the Ccs1/CcsB family. May interact with CcsA.

It localises to the cellular thylakoid membrane. Required during biogenesis of c-type cytochromes (cytochrome c6 and cytochrome f) at the step of heme attachment. The sequence is that of Cytochrome c biogenesis protein CcsB from Prochlorococcus marinus (strain NATL2A).